The sequence spans 491 residues: Bifunctional protein HldE (491 aa).

Positions 1–330 are ribokinase; it reads MDRKMVESLF…AAVSLEHRDS (330 aa). 205–208 serves as a coordination point for ATP; that stretch reads NRKE. Residue D275 is part of the active site. The interval 356-491 is cytidylyltransferase; that stretch reads FTNGCFDLLH…KVLERYTDEQ (136 aa).

It in the N-terminal section; belongs to the carbohydrate kinase PfkB family. In the C-terminal section; belongs to the cytidylyltransferase family. As to quaternary structure, homodimer.

It carries out the reaction D-glycero-beta-D-manno-heptose 7-phosphate + ATP = D-glycero-beta-D-manno-heptose 1,7-bisphosphate + ADP + H(+). The enzyme catalyses D-glycero-beta-D-manno-heptose 1-phosphate + ATP + H(+) = ADP-D-glycero-beta-D-manno-heptose + diphosphate. Its pathway is nucleotide-sugar biosynthesis; ADP-L-glycero-beta-D-manno-heptose biosynthesis; ADP-L-glycero-beta-D-manno-heptose from D-glycero-beta-D-manno-heptose 7-phosphate: step 1/4. The protein operates within nucleotide-sugar biosynthesis; ADP-L-glycero-beta-D-manno-heptose biosynthesis; ADP-L-glycero-beta-D-manno-heptose from D-glycero-beta-D-manno-heptose 7-phosphate: step 3/4. In terms of biological role, catalyzes the phosphorylation of D-glycero-D-manno-heptose 7-phosphate at the C-1 position to selectively form D-glycero-beta-D-manno-heptose-1,7-bisphosphate. Functionally, catalyzes the ADP transfer from ATP to D-glycero-beta-D-manno-heptose 1-phosphate, yielding ADP-D-glycero-beta-D-manno-heptose. The sequence is that of Bifunctional protein HldE from Trichlorobacter lovleyi (strain ATCC BAA-1151 / DSM 17278 / SZ) (Geobacter lovleyi).